Reading from the N-terminus, the 701-residue chain is Transcription factor PDR8 (701 aa).

The tract at residues 1–22 is disordered; sequence MDGSHFPMKSTTGEPVSSGKKG. The segment at residues 31 to 59 is a DNA-binding region (zn(2)-C6 fungal-type); that stretch reads CAFCRKRKLKCSQARPMCQQCVIRKLPQC.

It localises to the cytoplasm. The protein resides in the nucleus. Functionally, up-regulates the transcription of the genes for ATP-binding cassette (ABC) transporters YOR1 and PDR15, for major facilitator superfamily transporter AZR1, for pleiotropic drug resistance SNG1, for alpha-glucosidase YJL216C and for YLL056C. The sequence is that of Transcription factor PDR8 (PDR8) from Saccharomyces cerevisiae (strain ATCC 204508 / S288c) (Baker's yeast).